The following is a 158-amino-acid chain: Regulator of sigma D (158 aa).

It belongs to the Rsd/AlgQ family. Interacts with RpoD.

It localises to the cytoplasm. Functionally, binds RpoD and negatively regulates RpoD-mediated transcription activation by preventing the interaction between the primary sigma factor RpoD with the catalytic core of the RNA polymerase and with promoter DNA. May be involved in replacement of the RNA polymerase sigma subunit from RpoD to RpoS during the transition from exponential growth to the stationary phase. This chain is Regulator of sigma D, found in Escherichia coli (strain SMS-3-5 / SECEC).